A 162-amino-acid chain; its full sequence is uncharacterized protein (162 aa).

A compositionally biased stretch (basic and acidic residues) spans 65–76 (EEKPLEVAQDRN). Residues 65-93 (EEKPLEVAQDRNNKRKAPSHLEPAHDFIS) are disordered.

This is an uncharacterized protein from Bacillus subtilis (strain 168).